Consider the following 513-residue polypeptide: Sphingolipid C9-methyltransferase (513 aa).

The next 2 helical transmembrane spans lie at 52–72 (ILFSILALVPGYITYKLGLGF) and 74–94 (TWVFFFLILAIPILMAYWSIM). S-adenosyl-L-methionine is bound by residues 222–223 (YT), 259–267 (VLDIGCGWG), 285–290 (TLGRNQ), and 315–316 (YR).

This sequence belongs to the CFA/CMAS family.

It is found in the membrane. The enzyme catalyses a (4E,8E)-4-sphinga-4,8-dienine ceramide + S-adenosyl-L-methionine = a 9-methyl-(4E,8E)-sphinga-4,8-dienine ceramide + S-adenosyl-L-homocysteine + H(+). Its pathway is lipid metabolism; sphingolipid metabolism. Catalyzes methylation of the sphingoid base component of glucosylceramides (GluCers) at the C9-position. Sphingolipid C9-methylation requires 4,8-desaturated ceramides as substrates. Glucosylceramides play important roles in growth, differentiation and pathogenicity. The methyl group at the C9-position distinguishes fungal glucosylceramides from those of plants and animals, and may thus play a role in host-pathogen interactions enabling the host to recognize the fungal attack and initiate specific defense responses. Not necessary for vegetative growth at low temperatures, but plays a role in hyphal formation on solid medium. The chain is Sphingolipid C9-methyltransferase from Candida albicans (strain SC5314 / ATCC MYA-2876) (Yeast).